The following is a 79-amino-acid chain: Sulfur carrier protein TusA (79 aa).

Residue cysteine 17 is the Cysteine persulfide intermediate of the active site.

It belongs to the sulfur carrier protein TusA family.

Its subcellular location is the cytoplasm. Its function is as follows. Sulfur carrier protein which probably makes part of a sulfur-relay system. In Haemophilus influenzae (strain PittEE), this protein is Sulfur carrier protein TusA.